A 346-amino-acid chain; its full sequence is MSTVAAYAAMSATEPLTKTTITRRDPGPHDVAIDIKFAGICHSDIHTVKAEWGQPNYPVVPGHEIAGVVTAVGSEVTKYRQGDRVGVGCFVDSCRECNSCTRGIEQYCKPGANFTYNSIGKDGQPTQGGYSEAIVVDENYVLRIPDVLPLDVAAPLLCAGITLYSPLRHWNAGANTRVAIIGLGGLGHMGVKLGAAMGADVTVLSQSLKKMEDGLRLGAKSYYATADPDTFRKLRGGFDLILNTVSANLDLGQYLNLLDVDGTLVELGIPEHPMAVPAFALALMRRSLAGSNIGGIAETQEMLNFCAEHGVTPEIELIEPDYINDAYERVLASDVRYRFVIDISAL.

Residues C41, H63, C94, C97, C100, C108, and C158 each coordinate Zn(2+).

Belongs to the zinc-containing alcohol dehydrogenase family. It depends on Zn(2+) as a cofactor.

The enzyme catalyses a primary alcohol + NADP(+) = an aldehyde + NADPH + H(+). In Mycobacterium bovis (strain ATCC BAA-935 / AF2122/97), this protein is NADP-dependent alcohol dehydrogenase C (adhC).